The primary structure comprises 501 residues: Protein NBA1 (501 aa).

Disordered regions lie at residues 1–78 (MSEE…PGDN) and 102–133 (NRQQTQERRTSKDSNSLYSLKEPVSKNELPSL). Residues 11–20 (SRATLNTQRL) are compositionally biased toward polar residues. Over residues 46–55 (ITEEKADQSD) the composition is skewed to basic and acidic residues. S138 carries the post-translational modification Phosphoserine. The interval 146–165 (LSDNQSTKSNTNADEIVIKP) is disordered. A compositionally biased stretch (polar residues) spans 148–158 (DNQSTKSNTNA). S208 is modified (phosphoserine). 2 disordered regions span residues 267-286 (PIRSETNDYNPTIPPRSKDR) and 338-366 (AATSMPPEEETYLTRPLPSTPNEDSRVTS). The interval 275–501 (YNPTIPPRSK…DKATKALEGF (227 aa)) is necessary for the normal cellular distribution and bud neck targeting. The residue at position 403 (T403) is a Phosphothreonine.

Interacts with NAP1 (via the central domain consisting of amino acids 143 to 362). Copurifies with ribosomes. Post-translationally, phosphorylated by CDC28.

It is found in the bud neck. The protein resides in the cytoplasm. The protein is Protein NBA1 (NBA1) of Saccharomyces cerevisiae (strain ATCC 204508 / S288c) (Baker's yeast).